The following is a 250-amino-acid chain: Aliphatic sulfonates import ATP-binding protein SsuB 2 (250 aa).

Residues 13 to 229 enclose the ABC transporter domain; sequence VRLQGLTRSF…SYRDPLLGEY (217 aa). 45–52 is an ATP binding site; it reads GHSGSGKS.

It belongs to the ABC transporter superfamily. Aliphatic sulfonates importer (TC 3.A.1.17.2) family. The complex is composed of two ATP-binding proteins (SsuB), two transmembrane proteins (SsuC) and a solute-binding protein (SsuA).

The protein localises to the cell membrane. It carries out the reaction ATP + H2O + aliphatic sulfonate-[sulfonate-binding protein]Side 1 = ADP + phosphate + aliphatic sulfonateSide 2 + [sulfonate-binding protein]Side 1.. In terms of biological role, part of the ABC transporter complex SsuABC involved in aliphatic sulfonates import. Responsible for energy coupling to the transport system. The protein is Aliphatic sulfonates import ATP-binding protein SsuB 2 of Streptomyces avermitilis (strain ATCC 31267 / DSM 46492 / JCM 5070 / NBRC 14893 / NCIMB 12804 / NRRL 8165 / MA-4680).